Reading from the N-terminus, the 294-residue chain is Elongation factor Ts (294 aa).

Residues 81-84 (TDFV) form an involved in Mg(2+) ion dislocation from EF-Tu region.

The protein belongs to the EF-Ts family.

Its subcellular location is the cytoplasm. Functionally, associates with the EF-Tu.GDP complex and induces the exchange of GDP to GTP. It remains bound to the aminoacyl-tRNA.EF-Tu.GTP complex up to the GTP hydrolysis stage on the ribosome. The protein is Elongation factor Ts of Levilactobacillus brevis (strain ATCC 367 / BCRC 12310 / CIP 105137 / JCM 1170 / LMG 11437 / NCIMB 947 / NCTC 947) (Lactobacillus brevis).